A 35-amino-acid chain; its full sequence is Photosystem II reaction center protein T (35 aa).

A helical membrane pass occupies residues 3–23; it reads ALVYTFLLVGTLGIIFFAIFF.

This sequence belongs to the PsbT family. In terms of assembly, PSII is composed of 1 copy each of membrane proteins PsbA, PsbB, PsbC, PsbD, PsbE, PsbF, PsbH, PsbI, PsbJ, PsbK, PsbL, PsbM, PsbT, PsbY, PsbZ, Psb30/Ycf12, at least 3 peripheral proteins of the oxygen-evolving complex and a large number of cofactors. It forms dimeric complexes.

Its subcellular location is the plastid. It localises to the chloroplast thylakoid membrane. Found at the monomer-monomer interface of the photosystem II (PS II) dimer, plays a role in assembly and dimerization of PSII. PSII is a light-driven water plastoquinone oxidoreductase, using light energy to abstract electrons from H(2)O, generating a proton gradient subsequently used for ATP formation. The protein is Photosystem II reaction center protein T of Zygnema circumcarinatum (Green alga).